We begin with the raw amino-acid sequence, 249 residues long: DNA repair protein RecO (249 aa).

The protein belongs to the RecO family.

In terms of biological role, involved in DNA repair and RecF pathway recombination. The polypeptide is DNA repair protein RecO (Polaromonas sp. (strain JS666 / ATCC BAA-500)).